The primary structure comprises 127 residues: Copper resistance protein C (127 aa).

The first 25 residues, 1–25 (MFAFRSIATTVVMVAASLASASAFA), serve as a signal peptide directing secretion. Cu cation is bound by residues H26, M65, M68, M71, M76, and H116.

The protein belongs to the CopC family.

It localises to the periplasm. In terms of biological role, copper-binding protein involved in copper resistance. In Xanthomonas campestris pv. juglandis (Xanthomonas arboricola pv. juglandis), this protein is Copper resistance protein C.